Reading from the N-terminus, the 389-residue chain is Succinate--CoA ligase [ADP-forming] subunit beta (389 aa).

The 228-residue stretch at 9-236 folds into the ATP-grasp domain; it reads KELFAKHGVP…RDATDPLELK (228 aa). Residues Lys-45, 52–54, Ser-94, and Glu-99 each bind ATP; that span reads GRG. Mg(2+)-binding residues include Asn-191 and Asp-205. Substrate contacts are provided by residues Asn-256 and 318 to 320; that span reads GIT.

Belongs to the succinate/malate CoA ligase beta subunit family. Heterotetramer of two alpha and two beta subunits. The cofactor is Mg(2+).

The catalysed reaction is succinate + ATP + CoA = succinyl-CoA + ADP + phosphate. It carries out the reaction GTP + succinate + CoA = succinyl-CoA + GDP + phosphate. It participates in carbohydrate metabolism; tricarboxylic acid cycle; succinate from succinyl-CoA (ligase route): step 1/1. Functionally, succinyl-CoA synthetase functions in the citric acid cycle (TCA), coupling the hydrolysis of succinyl-CoA to the synthesis of either ATP or GTP and thus represents the only step of substrate-level phosphorylation in the TCA. The beta subunit provides nucleotide specificity of the enzyme and binds the substrate succinate, while the binding sites for coenzyme A and phosphate are found in the alpha subunit. The polypeptide is Succinate--CoA ligase [ADP-forming] subunit beta (Rhodococcus erythropolis (strain PR4 / NBRC 100887)).